A 174-amino-acid chain; its full sequence is Large ribosomal subunit protein uL10 (174 aa).

It belongs to the universal ribosomal protein uL10 family. Part of the ribosomal stalk of the 50S ribosomal subunit. The N-terminus interacts with L11 and the large rRNA to form the base of the stalk. The C-terminus forms an elongated spine to which L12 dimers bind in a sequential fashion forming a multimeric L10(L12)X complex.

Forms part of the ribosomal stalk, playing a central role in the interaction of the ribosome with GTP-bound translation factors. In Synechococcus sp. (strain RCC307), this protein is Large ribosomal subunit protein uL10.